Consider the following 107-residue polypeptide: UPF0235 protein RPC_0058 (107 aa).

The protein belongs to the UPF0235 family.

This Rhodopseudomonas palustris (strain BisB18) protein is UPF0235 protein RPC_0058.